Here is a 941-residue protein sequence, read N- to C-terminus: Coiled-coil and C2 domain-containing protein 1A (941 aa).

Threonine 91 bears the Phosphothreonine mark. Disordered regions lie at residues 183 to 248 (TINE…PCSP) and 301 to 336 (SRLP…VPQP). Over residues 228–239 (APSTTAQTSAKP) the composition is skewed to polar residues. Phosphoserine is present on serine 247. Pro residues predominate over residues 303–318 (LPPPPDQLSPEPPLPA). The stretch at 338-384 (KNLLEALEQRMERYHVAAAQAKAKGDQRKARMHERIVKQYQDAIRAH) forms a coiled coil. A disordered region spans residues 428–482 (ANHEEGSDEEEEETPKKNTPAASTAQPKASPSRAPPSGPAPAGKAASKGTSTRAQ). Residue serine 434 is modified to Phosphoserine. The segment covering 467 to 476 (APAGKAASKG) has biased composition (low complexity). Positions 475–508 (KGTSTRAQQQLAFLEGRKKQLLQAALRAKQKNDV) form a coiled coil. Residues 628-762 (RFEQRTFSVI…ETACEVHEIL (135 aa)) enclose the C2 domain.

This sequence belongs to the CC2D1 family. In terms of tissue distribution, strongly expressed in several brain areas including frontal cortex, cortex, mesencephalon, hippocampus, midbrain and hypothalamus. Also expressed in testis and at low levels in pituitary, liver and kidney. In brain the highest levels are detected in hippocampal pyramidal cells and raphe nuclei.

It is found in the cytoplasm. The protein localises to the nucleus. Its subcellular location is the cytoskeleton. It localises to the microtubule organizing center. The protein resides in the centrosome. Functionally, transcription factor that binds specifically to the DRE (dual repressor element) and represses 5-HT1A gene transcription though this element. Mediates HDAC-independent repression of HTR1A promoter. CAMK2G inhibits CC2D1a-induced repression of the HTR1A. May play a role in the altered regulation of 5-HT1A receptors associated with anxiety and major depression. Performs essential function in controlling functional maturation of synapses. In Rattus norvegicus (Rat), this protein is Coiled-coil and C2 domain-containing protein 1A (Cc2d1a).